The chain runs to 305 residues: tRNA-splicing endonuclease (305 aa).

Active-site residues include Tyr246, His257, and Lys287.

The protein belongs to the tRNA-intron endonuclease family. Archaeal long subfamily. In terms of assembly, homodimer.

The catalysed reaction is pretRNA = a 3'-half-tRNA molecule with a 5'-OH end + a 5'-half-tRNA molecule with a 2',3'-cyclic phosphate end + an intron with a 2',3'-cyclic phosphate and a 5'-hydroxyl terminus.. Functionally, endonuclease that removes tRNA introns. Cleaves pre-tRNA at the 5'- and 3'-splice sites to release the intron. The products are an intron and two tRNA half-molecules bearing 2',3' cyclic phosphate and 5'-OH termini. Recognizes a pseudosymmetric substrate in which 2 bulged loops of 3 bases are separated by a stem of 4 bp. This Archaeoglobus fulgidus (strain ATCC 49558 / DSM 4304 / JCM 9628 / NBRC 100126 / VC-16) protein is tRNA-splicing endonuclease.